Consider the following 156-residue polypeptide: Small ribosomal subunit protein uS7 (156 aa).

Belongs to the universal ribosomal protein uS7 family. In terms of assembly, part of the 30S ribosomal subunit. Contacts proteins S9 and S11.

In terms of biological role, one of the primary rRNA binding proteins, it binds directly to 16S rRNA where it nucleates assembly of the head domain of the 30S subunit. Is located at the subunit interface close to the decoding center, probably blocks exit of the E-site tRNA. This chain is Small ribosomal subunit protein uS7, found in Clavibacter sepedonicus (Clavibacter michiganensis subsp. sepedonicus).